A 239-amino-acid chain; its full sequence is Lactate utilization protein A 1 (239 aa).

Belongs to the LutA/YkgE family.

Is involved in L-lactate degradation and allows cells to grow with lactate as the sole carbon source. The sequence is that of Lactate utilization protein A 1 from Bacillus anthracis (strain A0248).